We begin with the raw amino-acid sequence, 426 residues long: tRNA methyltransferase 10 homolog C (426 aa).

The transit peptide at 1–41 (MPVLLKMSVSITFLRPFARVLVPFTLHRKRRVLYSTIMQRY) directs the protein to the mitochondrion. Serine 86 carries the phosphoserine modification. The stretch at 138–166 (LYIKEKMKKARQIKKEMKKAEKEEPKKDQ) forms a coiled coil. An SAM-dependent MTase TRM10-type domain is found at 193 to 385 (MGWKGAQAMQ…KFVPSRKHAG (193 aa)).

Belongs to the class IV-like SAM-binding methyltransferase superfamily. TRM10 family. As to quaternary structure, component of mitochondrial ribonuclease P, a complex composed of TRMT10C/MRPP1, HSD17B10/MRPP2 and PRORP/MRPP3. Interacts with HSD17B10/MRPP2; forming the MRPP1-MRPP2 subcomplex of the mitochondrial ribonuclease P complex. Interacts with GRSF1.

It is found in the mitochondrion matrix. The protein resides in the mitochondrion nucleoid. The enzyme catalyses adenosine(9) in tRNA + S-adenosyl-L-methionine = N(1)-methyladenosine(9) in tRNA + S-adenosyl-L-homocysteine + H(+). The catalysed reaction is guanosine(9) in tRNA + S-adenosyl-L-methionine = N(1)-methylguanosine(9) in tRNA + S-adenosyl-L-homocysteine + H(+). It carries out the reaction an adenosine in mRNA + S-adenosyl-L-methionine = an N(1)-methyladenosine in mRNA + S-adenosyl-L-homocysteine + H(+). In terms of biological role, mitochondrial tRNA N(1)-methyltransferase involved in mitochondrial tRNA maturation. Component of mitochondrial ribonuclease P, a complex composed of TRMT10C/MRPP1, HSD17B10/MRPP2 and PRORP/MRPP3, which cleaves tRNA molecules in their 5'-ends. Together with HSD17B10/MRPP2, forms a subcomplex of the mitochondrial ribonuclease P, named MRPP1-MRPP2 subcomplex, which displays functions that are independent of the ribonuclease P activity. The MRPP1-MRPP2 subcomplex catalyzes the formation of N(1)-methylguanine and N(1)-methyladenine at position 9 (m1G9 and m1A9, respectively) in tRNAs; TRMT10C/MRPP1 acting as the catalytic N(1)-methyltransferase subunit. The MRPP1-MRPP2 subcomplex also acts as a tRNA maturation platform: following 5'-end cleavage by the mitochondrial ribonuclease P complex, the MRPP1-MRPP2 subcomplex enhances the efficiency of 3'-processing catalyzed by ELAC2, retains the tRNA product after ELAC2 processing and presents the nascent tRNA to the mitochondrial CCA tRNA nucleotidyltransferase TRNT1 enzyme. In addition to tRNA N(1)-methyltransferase activity, TRMT10C/MRPP1 also acts as a mRNA N(1)-methyltransferase by mediating methylation of adenosine residues at the N(1) position of MT-ND5 mRNA. Associates with mitochondrial DNA complexes at the nucleoids to initiate RNA processing and ribosome assembly. In Bos taurus (Bovine), this protein is tRNA methyltransferase 10 homolog C.